The primary structure comprises 352 residues: C-C chemokine receptor type 5 (352 aa).

The Extracellular segment spans residues methionine 1–alanine 30. A Sulfotyrosine modification is found at tyrosine 3. Serine 6 carries O-linked (GalNAc...) serine glycosylation. 2 positions are modified to sulfotyrosine: tyrosine 10 and tyrosine 14. O-linked (GalNAc...) serine glycosylation is present at serine 17. Disulfide bonds link cysteine 20/cysteine 269 and cysteine 101/cysteine 178. The helical transmembrane segment at arginine 31 to cysteine 58 threads the bilayer. Over lysine 59 to tyrosine 68 the chain is Cytoplasmic. The helical transmembrane segment at leucine 69–tyrosine 89 threads the bilayer. The Extracellular portion of the chain corresponds to alanine 90–lysine 102. A helical membrane pass occupies residues valine 103 to isoleucine 124. The Cytoplasmic segment spans residues aspartate 125–threonine 141. Residues valine 142 to phenylalanine 166 traverse the membrane as a helical segment. The Extracellular segment spans residues threonine 167–arginine 198. The chain crosses the membrane as a helical span at residues asparagine 199–leucine 218. Residues lysine 219–arginine 235 are Cytoplasmic-facing. Residues leucine 236–phenylalanine 260 traverse the membrane as a helical segment. Residues glutamine 261–arginine 277 lie on the Extracellular side of the membrane. Residues alanine 278 to glycine 301 form a helical membrane-spanning segment. The Cytoplasmic portion of the chain corresponds to glutamate 302 to leucine 352. 2 S-palmitoyl cysteine lipidation sites follow: cysteine 321 and cysteine 324. The interval proline 332 to leucine 352 is disordered. Phosphoserine; by BARK1 occurs at positions 336, 337, 342, and 349. Residues serine 337–glutamine 346 show a composition bias toward polar residues.

It belongs to the G-protein coupled receptor 1 family. Interacts with PRAF2. Efficient ligand binding to CCL3/MIP-1alpha and CCL4/MIP-1beta requires sulfation, O-glycosylation and sialic acid modifications. Glycosylation on Ser-6 is required for efficient binding of CCL4. Interacts with GRK2. Interacts with ARRB1 and ARRB2. Interacts with CNIH4. Interacts with S100A4; this interaction stimulates T-lymphocyte chemotaxis. In terms of processing, sulfated on at least 2 of the N-terminal tyrosines. Sulfation is required for efficient binding of the chemokines, CCL3 and CCL4. O-glycosylated, but not N-glycosylated. Ser-6 appears to be the major site. Also sialylated glycans present which contribute to chemokine binding. Ser-17 may also be glycosylated and, if so, with small moieties such as a T-antigen. Post-translationally, palmitoylation in the C-terminal is important for cell surface expression. In terms of processing, phosphorylation on serine residues in the C-terminal is stimulated by binding CC chemokines especially by APO-RANTES.

The protein localises to the cell membrane. Receptor for a number of inflammatory CC-chemokines including CCL3/MIP-1-alpha, CCL4/MIP-1-beta and RANTES and subsequently transduces a signal by increasing the intracellular calcium ion level. May play a role in the control of granulocytic lineage proliferation or differentiation. Participates in T-lymphocyte migration to the infection site by acting as a chemotactic receptor. The protein is C-C chemokine receptor type 5 (CCR5) of Oryctolagus cuniculus (Rabbit).